A 3567-amino-acid polypeptide reads, in one-letter code: Zinc finger homeobox protein 4 (3567 aa).

Met-1 carries the N-acetylmethionine modification. Disordered stretches follow at residues 1-54 (METC…LKTD), 425-480 (LSHS…AYSN), 522-545 (TSSS…VRAS), and 565-611 (SKDS…SPGS). A compositionally biased stretch (polar residues) spans 9 to 28 (ISRQENGQSTSKLCGTTQLD). Composition is skewed to basic and acidic residues over residues 39–54 (EPDR…LKTD) and 434–452 (KMSE…KESN). The segment covering 468–480 (EPGDEDEEDAYSN) has biased composition (acidic residues). 3 C2H2-type zinc fingers span residues 613–636 (IECP…TMMH), 644–667 (LKCP…KEKH), and 699–723 (FRCE…SDKH). Residues 767–789 (WRCEVCDYETNVARNLRIHMTSE) form a C2H2-type 4; degenerate zinc finger. 3 C2H2-type zinc fingers span residues 917 to 941 (YQCK…TDKH), 973 to 995 (LKCN…TTNH), and 1021 to 1045 (YYCA…SVKH). The tract at residues 1098–1160 (EQHEEAEGAI…EDVATKRSKP (63 aa)) is disordered. Composition is skewed to basic and acidic residues over residues 1120-1132 (TSER…KNSN) and 1148-1160 (AKEE…RSKP). Lys-1149 participates in a covalent cross-link: Glycyl lysine isopeptide (Lys-Gly) (interchain with G-Cter in SUMO2). 2 C2H2-type zinc fingers span residues 1172–1195 (YQCP…LSQH) and 1201–1224 (ICCP…THLH). Positions 1254-1324 (AASEKSERDT…WNKNSSKDVK (71 aa)) are disordered. A compositionally biased stretch (basic and acidic residues) spans 1281–1310 (MDDKSMAGLEDSKANVEVKNEEQKPTKEPL). Glycyl lysine isopeptide (Lys-Gly) (interchain with G-Cter in SUMO2) cross-links involve residues Lys-1299 and Lys-1324. C2H2-type zinc fingers lie at residues 1352-1374 (YRCN…SQYH) and 1380-1403 (TMCN…EAGH). Residues 1429–1480 (ETMSQDDHGLEQEMEREYEVDHEGKASPVGSDSSSIPDDMGSEPKRTLPFRK) form a disordered region. A compositionally biased stretch (basic and acidic residues) spans 1433–1453 (QDDHGLEQEMEREYEVDHEGK). The segment at 1496 to 1522 (YKCTVCKESFTQKNILLVHYNSVSHLH) adopts a C2H2-type 12 zinc-finger fold. Residue Lys-1546 forms a Glycyl lysine isopeptide (Lys-Gly) (interchain with G-Cter in SUMO2) linkage. The C2H2-type 13 zinc-finger motif lies at 1548–1572 (YKCSICNVAYSQSSTLEIHMRSVLH). Composition is skewed to low complexity over residues 1761 to 1772 (TQPQLQPQKQQQ) and 1779 to 1791 (QQQQ…LLKQ). Disordered regions lie at residues 1761–1791 (TQPQ…LLKQ) and 1809–1858 (SYKE…IASG). Lys-1790 is covalently cross-linked (Glycyl lysine isopeptide (Lys-Gly) (interchain with G-Cter in SUMO2)). Over residues 1809–1845 (SYKEAEDISEKPEKPKQEFISEGEGLKEGKDTKKQKS) the composition is skewed to basic and acidic residues. The C2H2-type 14 zinc-finger motif lies at 1901-1924 (LECGTCGKLFSNVLILKSHQEHVH). Residues 1948-2024 (YPISPSSPET…PPSAPPQVQL (77 aa)) are disordered. 2 stretches are compositionally biased toward pro residues: residues 1955–1974 (PETP…PPQP) and 1991–2019 (QAPP…PSAP). 2 consecutive DNA-binding regions (homeobox) follow at residues 2084-2143 (FKRP…RQRN) and 2181-2240 (KRSS…RKSY). A C2H2-type 15; degenerate zinc finger spans residues 2267 to 2291 (YQCKKCNVVFPRIFDLITHQKKQCY). Disordered regions lie at residues 2289 to 2311 (QCYK…MDAT) and 2328 to 2431 (AKNA…SPLQ). The span at 2293 to 2309 (DEDDDAQDESQTEDSMD) shows a compositional bias: acidic residues. A compositionally biased stretch (low complexity) spans 2331–2345 (AAAPAASSGSGTSTP). A compositionally biased stretch (basic and acidic residues) spans 2352-2370 (PEPEKTSPKPEYPAEKPKQ). Residues 2419–2431 (SASQTPVPSSPLQ) are compositionally biased toward polar residues. The C2H2-type 16 zinc-finger motif lies at 2448–2470 (YQCDQCTVAFPTLELWQEHQHMH). The span at 2507 to 2530 (LGSSLTQMPPQASSSHTTAPTTVA) shows a compositional bias: polar residues. Positions 2507 to 2564 (LGSSLTQMPPQASSSHTTAPTTVAASLKRKLDDKEDNNCSEKEGGNSGEDQHRDKRLR) are disordered. Residues 2535 to 2559 (RKLDDKEDNNCSEKEGGNSGEDQHR) show a composition bias toward basic and acidic residues. Positions 2560-2619 (DKRLRTTITPEQLEILYEKYLLDSNPTRKMLDHIAREVGLKKRVVQVWFQNTRARERKGQ) form a DNA-binding region, homeobox 3. The segment at 2630-2653 (KRCPFCRALFKAKSALESHIRSRH) adopts a C2H2-type 17 zinc-finger fold. Position 2663 is a phosphoserine (Ser-2663). Polar residues predominate over residues 2764 to 2785 (AISDATTGDEGNTEMESTTGSS). Disordered regions lie at residues 2764 to 2811 (AISD…TTPT) and 2829 to 2885 (HFND…PGHK). The span at 2830–2839 (FNDKDGDHDQ) shows a compositional bias: basic and acidic residues. Over residues 2862-2874 (PSSPNPFGSSNPF) the composition is skewed to low complexity. Residues 2884–2943 (HKRFRTQMSNLQLKVLKACFSDYRTPTMQECEMLGNEIGLPKRVVQVWFQNARAKEKKFK) constitute a DNA-binding region (homeobox 4). The segment at 2962–2986 (PECTLCGVKYSARLSIRDHIFSKQH) adopts a C2H2-type 18 zinc-finger fold. Residues 3092–3110 (SATSSPALSLSSAPTKPLL) are compositionally biased toward low complexity. Disordered regions lie at residues 3092-3172 (SATS…KEEK) and 3281-3337 (LQKQ…LESK). The span at 3111–3125 (QTPPPPPPPPPPPPS) shows a compositional bias: pro residues. Polar residues predominate over residues 3126-3135 (SSLSGQQTEQ). A compositionally biased stretch (basic and acidic residues) spans 3153–3172 (IKEEELEATKPEKHPKKEEK). Residue Lys-3154 forms a Glycyl lysine isopeptide (Lys-Gly) (interchain with G-Cter in SUMO2) linkage. Residues 3265–3294 (ALLQQYQQYQQNLQESLQKQQKQQQEQQQK) are a coiled coil. Positions 3281 to 3293 (LQKQQKQQQEQQQ) are enriched in low complexity. Over residues 3294–3314 (KPVQAKTSKVESDQPQNSNDA) the composition is skewed to polar residues. Residues 3315–3337 (SETKEDKSTATESTKEEPQLESK) are compositionally biased toward basic and acidic residues. A C2H2-type 19; degenerate zinc finger spans residues 3354-3378 (FICRKCQMMFTDEDAAVNHQKSFCY). The C2H2-type 20 zinc-finger motif lies at 3398 to 3422 (YQCLACDVAISGNEALSQHLQSSLH). Disordered stretches follow at residues 3443 to 3462 (HSVC…AASS) and 3511 to 3534 (STSG…ELSQ). Residues 3447 to 3462 (SPNPNTTSTSQSAASS) are compositionally biased toward low complexity.

It belongs to the krueppel C2H2-type zinc-finger protein family. In terms of tissue distribution, expressed in brain, skeletal muscle and liver. Very low expression in stomach.

It localises to the nucleus. Functionally, may play a role in neural and muscle differentiation. May be involved in transcriptional regulation. The protein is Zinc finger homeobox protein 4 (ZFHX4) of Homo sapiens (Human).